The primary structure comprises 300 residues: N-acetylmuramic acid 6-phosphate etherase 1 (300 aa).

The 164-residue stretch at 57–220 (IATAFAQGGR…TTGAMIKSGK (164 aa)) folds into the SIS domain. Glutamate 85 (proton donor) is an active-site residue. Glutamate 116 is an active-site residue.

The protein belongs to the GCKR-like family. MurNAc-6-P etherase subfamily. Homodimer.

The enzyme catalyses N-acetyl-D-muramate 6-phosphate + H2O = N-acetyl-D-glucosamine 6-phosphate + (R)-lactate. It participates in amino-sugar metabolism; 1,6-anhydro-N-acetylmuramate degradation. Its pathway is amino-sugar metabolism; N-acetylmuramate degradation. The protein operates within cell wall biogenesis; peptidoglycan recycling. Its function is as follows. Specifically catalyzes the cleavage of the D-lactyl ether substituent of MurNAc 6-phosphate, producing GlcNAc 6-phosphate and D-lactate. Together with AnmK, is also required for the utilization of anhydro-N-acetylmuramic acid (anhMurNAc) either imported from the medium or derived from its own cell wall murein, and thus plays a role in cell wall recycling. In Vibrio cholerae serotype O1 (strain ATCC 39315 / El Tor Inaba N16961), this protein is N-acetylmuramic acid 6-phosphate etherase 1.